The following is a 480-amino-acid chain: Acyl-lipid (8-3)-desaturase (480 aa).

A disordered region spans residues 1–30 (MAPHSADTAGLVPSDELRLRTSNSKGPEQE). The Cytochrome b5 heme-binding domain occupies 33-107 (LKKYTLEDVS…LAKYCIGELV (75 aa)). 2 residues coordinate heme: H68 and H90. Helical transmembrane passes span 151 to 171 (IHPHMILKSLFILGGYFASYY) and 173 to 193 (AFFWSSSVLVSLFFALWMGFF). Residues 203–207 (HDGNH) carry the Histidine box-1 motif. The short motif at 238–243 (HVVGHH) is the Histidine box-2 element. Helical transmembrane passes span 280 to 300 (IYLAVLYGTLALKSIFLDDFL), 322 to 342 (IFFQGKLLYAFYMFVLPSVYG), and 348 to 368 (TFLALYVASQLITGWMLAFLF). The short motif at 419–423 (QIEHH) is the Histidine box-3 element.

It belongs to the fatty acid desaturase type 1 family. The cofactor is Fe(2+).

The protein resides in the membrane. The catalysed reaction is an (8Z,11Z,14Z)-icosatrienoyl-containing glycerolipid + 2 Fe(II)-[cytochrome b5] + O2 + 2 H(+) = (5Z,8Z,11Z,14Z)-eicosatetraenoyl-containing glycerolipid + 2 Fe(III)-[cytochrome b5] + 2 H2O. It catalyses the reaction an (8Z,11Z,14Z,17Z)-eicosatetraenoyl-containing glycerolipid + 2 Fe(II)-[cytochrome b5] + O2 + 2 H(+) = a (5Z,8Z,11Z,14Z,17Z)-eicosapentaenoyl-containing glycerolipid + 2 Fe(III)-[cytochrome b5] + 2 H2O. In terms of biological role, fatty acid desaturase that introduces a cis double bond at the 5-position in 20-carbon polyunsaturated fatty acids incorporated in a glycerolipid that contain a Delta(8) double bond. The sequence is that of Acyl-lipid (8-3)-desaturase from Physcomitrium patens (Spreading-leaved earth moss).